The following is a 255-amino-acid chain: Cytosolic Fe-S cluster assembly factor Nubp2 homolog (255 aa).

14-21 (GKGGVGKS) contacts ATP. [4Fe-4S] cluster contacts are provided by Cys-185 and Cys-188.

The protein belongs to the Mrp/NBP35 ATP-binding proteins family. NUBP2/CFD1 subfamily. As to quaternary structure, heterotetramer of 2 Nubp1 and 2 Nubp2 chains. [4Fe-4S] cluster serves as cofactor.

It is found in the cytoplasm. Component of the cytosolic iron-sulfur (Fe/S) protein assembly (CIA) machinery. Required for maturation of extramitochondrial Fe-S proteins. The Nubp1-Nubp2 heterotetramer forms a Fe-S scaffold complex, mediating the de novo assembly of an Fe-S cluster and its transfer to target apoproteins. The polypeptide is Cytosolic Fe-S cluster assembly factor Nubp2 homolog (Drosophila persimilis (Fruit fly)).